We begin with the raw amino-acid sequence, 212 residues long: Outer-membrane lipoprotein carrier protein (212 aa).

The signal sequence occupies residues 1 to 25 (MRKRILVSACAALAVFAAHMPTALA).

Belongs to the LolA family. Monomer.

The protein resides in the periplasm. Participates in the translocation of lipoproteins from the inner membrane to the outer membrane. Only forms a complex with a lipoprotein if the residue after the N-terminal Cys is not an aspartate (The Asp acts as a targeting signal to indicate that the lipoprotein should stay in the inner membrane). The chain is Outer-membrane lipoprotein carrier protein from Cupriavidus pinatubonensis (strain JMP 134 / LMG 1197) (Cupriavidus necator (strain JMP 134)).